The sequence spans 569 residues: Probable protein phosphatase 2C BIPP2C1 (569 aa).

Disordered stretches follow at residues 166 to 212 (GSSN…SSKV) and 251 to 279 (SLDD…GSSI). Residues 174–183 (SEVGVESECG) are compositionally biased toward low complexity. Positions 329-564 (AAMLPHPSKV…DDVTVVVSVV (236 aa)) constitute a PPM-type phosphatase domain. Residues Asp-358, Gly-359, Asp-488, and Asp-555 each contribute to the Mn(2+) site.

It belongs to the PP2C family. The cofactor is Mg(2+). Mn(2+) is required as a cofactor.

The enzyme catalyses O-phospho-L-seryl-[protein] + H2O = L-seryl-[protein] + phosphate. The catalysed reaction is O-phospho-L-threonyl-[protein] + H2O = L-threonyl-[protein] + phosphate. May play a role in responses to biotic and abiotic stresses. The chain is Probable protein phosphatase 2C BIPP2C1 (BIPP2C1) from Oryza sativa subsp. indica (Rice).